The sequence spans 316 residues: Daunorubicin resistance ATP-binding protein DrrA3 (316 aa).

Positions 6-236 (ITVDGAEKRY…TGGDRIDVVL (231 aa)) constitute an ABC transporter domain. An ATP-binding site is contributed by 38 to 45 (GPNGAGKT).

This sequence belongs to the ABC transporter superfamily. Drug exporter-1 (DrugE1) (TC 3.A.1.105) family. In terms of assembly, the complex is probably composed of two ATP-binding proteins (DrrA3) and two transmembrane proteins (DrrB3).

Its subcellular location is the cell membrane. The catalysed reaction is daunorubicin(in) + ATP + H2O = daunorubicin(out) + ADP + phosphate + H(+). In terms of biological role, part of the ABC transporter complex DrrA3B3 involved in daunorubicin efflux. Responsible for energy coupling to the transport system. Confers self-resistance to daunorubicin, an antibiotic produced by S.coeruleorubidus. The efficiency of DrrA3B3 to export daunorubicin is probably lower than that of DrrA1B1 or DrrA2B2. The sequence is that of Daunorubicin resistance ATP-binding protein DrrA3 from Streptomyces coeruleorubidus.